A 184-amino-acid polypeptide reads, in one-letter code: Cobalamin adenosyltransferase (184 aa).

A disordered region spans residues 1-21; the sequence is MGNRLSKIATRTGDAGTTGLG. ATP is bound by residues 10–13, 18–19, Lys-28, 130–134, and Asn-154; these read TRTG, TG, and RRAER.

It belongs to the Cob(I)alamin adenosyltransferase family. In terms of assembly, homotrimer.

The enzyme catalyses 2 cob(II)alamin + AH2 + 2 ATP = 2 adenosylcob(III)alamin + 2 triphosphate + A + 2 H(+). Is potentially allosterically regulated by GTP/GDP, which enhances its affinity for AdoCbl by 5-fold. Binds cob(II)alamin weakly in the absence of ATP. The presence of ATP (but not GTP or GDP) increases the affinity of cob(II)alamin for the enzyme, and stoichiometric binding is observed. GTP blocks the transfer of cob(II)alamin to IcmF from ATR, thus averting its reconstitution with inactive cofactor. Functionally, adenosyltransferase that catalyzes the conversion of cob(II)alamin to adenosylcob(III)alamin (AdoCbl) in the presence of ATP and an electron donor. Acts as an accessory protein of IcmF that functions in cofactor repair, since IcmF is prone to inactivation during catalytic turnover due to the occasional loss of the 5'-deoxyadenosine moiety and formation of the inactive cob(II)alamin cofactor in its active site. Thus, receives and repairs the inactive cofactor, which is then reloaded onto IcmF in a GTPase-gated step. This is Cobalamin adenosyltransferase from Cupriavidus metallidurans (strain ATCC 43123 / DSM 2839 / NBRC 102507 / CH34) (Ralstonia metallidurans).